The chain runs to 462 residues: MAPRGSGRLEAVVFAVMVLFCSGTSTATTAAAPASSPGIQTSSPAPGTGSTRLPGTRASTQQLTMNCSAGGILYSVLGGPFALRCRLSRAPKANETLYAMLAPLPSNTMAAADRPHGSLSHLGNGRAPLSTIYRYNVTAKAGTLDPSAQRSGLAVAIDTESSGDPISFVIYSNMSTRAHIGEYIWRMHDAGGTTADYATIVLLARPPIAAKAPSTNFFLDADVASALVVEASGAYPPSTLTGAWFIDGNRSAESAGFATNVRQIITSDGEVDVKWFLINTKDSPPPSVTPQTTVTFVATWTPPKGFETVFPDGKVTLTKVLRPLWLRKPIVQVSRFPPGYLVCRASDILCDHGDLQWSAGGKIVKSEHQAARTRMHLGSKLCALVQILDIPEDTSLQQSVTYTCTLRGYERIYNWLNGTIELDNMPLRQGRPMLICLAVVMGLFVLGSFLAVVISACLWGSG.

An N-terminal signal peptide occupies residues 1–23; sequence MAPRGSGRLEAVVFAVMVLFCSG. Residues 24 to 433 are Virion surface-facing; that stretch reads TSTATTAAAP…NMPLRQGRPM (410 aa). Residues 29–38 show a composition bias toward low complexity; it reads TAAAPASSPG. The tract at residues 29 to 57 is disordered; sequence TAAAPASSPGIQTSSPAPGTGSTRLPGTR. Over residues 39–57 the composition is skewed to polar residues; that stretch reads IQTSSPAPGTGSTRLPGTR. Residues Asn-66, Asn-94, Asn-136, Asn-173, Asn-249, and Asn-417 are each glycosylated (N-linked (GlcNAc...) asparagine; by host). The chain crosses the membrane as a helical span at residues 434–454; that stretch reads LICLAVVMGLFVLGSFLAVVI. The Cytoplasmic portion of the chain corresponds to 455–462; sequence SACLWGSG.

The protein belongs to the herpesviridae glycoprotein C family.

The protein localises to the virion membrane. This chain is Envelope glycoprotein C (gC), found in Psittacid herpesvirus 1 (isolate Amazon parrot/-/97-0001/1997) (PsHV-1).